The primary structure comprises 272 residues: Acyl-[acyl-carrier-protein]--UDP-N-acetylglucosamine O-acyltransferase (272 aa).

The protein belongs to the transferase hexapeptide repeat family. LpxA subfamily. Homotrimer.

The protein localises to the cytoplasm. It carries out the reaction a (3R)-hydroxyacyl-[ACP] + UDP-N-acetyl-alpha-D-glucosamine = a UDP-3-O-[(3R)-3-hydroxyacyl]-N-acetyl-alpha-D-glucosamine + holo-[ACP]. Its pathway is glycolipid biosynthesis; lipid IV(A) biosynthesis; lipid IV(A) from (3R)-3-hydroxytetradecanoyl-[acyl-carrier-protein] and UDP-N-acetyl-alpha-D-glucosamine: step 1/6. In terms of biological role, involved in the biosynthesis of lipid A, a phosphorylated glycolipid that anchors the lipopolysaccharide to the outer membrane of the cell. The polypeptide is Acyl-[acyl-carrier-protein]--UDP-N-acetylglucosamine O-acyltransferase (Methylobacterium radiotolerans (strain ATCC 27329 / DSM 1819 / JCM 2831 / NBRC 15690 / NCIMB 10815 / 0-1)).